The primary structure comprises 353 residues: Inositol-tetrakisphosphate 1-kinase 3 (353 aa).

The tract at residues 1–25 (MKLTDNEEITMNGTREMETTEQETS) is disordered. 1D-myo-inositol 1,3,4-trisphosphate-binding residues include Lys-50 and Lys-92. Residues Arg-127 and Lys-177 each coordinate ATP. The region spanning 138–350 (NLSDSNGRVG…QSQCKKRALA (213 aa)) is the ATP-grasp domain. 1D-myo-inositol 1,3,4-trisphosphate-binding residues include His-188 and Lys-220. ATP-binding positions include 209–220 (QEFVNHGGVLFK) and Ser-235. Positions 300, 315, and 317 each coordinate Mg(2+). Asn-317 provides a ligand contact to 1D-myo-inositol 1,3,4-trisphosphate.

Belongs to the ITPK1 family. In terms of assembly, monomer. Mg(2+) serves as cofactor. As to expression, highly expressed in leaves and flowers, and at lower levels in roots, stems, cauline leaves and siliques.

It carries out the reaction 1D-myo-inositol 3,4,5,6-tetrakisphosphate + ATP = 1D-myo-inositol 1,3,4,5,6-pentakisphosphate + ADP + H(+). The enzyme catalyses 1D-myo-inositol 1,3,4-trisphosphate + ATP = 1D-myo-inositol 1,3,4,5-tetrakisphosphate + ADP + H(+). It catalyses the reaction 1D-myo-inositol 1,3,4-trisphosphate + ATP = 1D-myo-inositol 1,3,4,6-tetrakisphosphate + ADP + H(+). In terms of biological role, kinase that can phosphorylate various inositol polyphosphate such as Ins(3,4,5,6)P4 or Ins(1,3,4)P3. Phosphorylates Ins(3,4,5,6)P4 to form InsP5. This reaction is thought to have regulatory importance, since Ins(3,4,5,6)P4 is an inhibitor of plasma membrane Ca(2+)-activated Cl(-) channels, while Ins(1,3,4,5,6)P5 is not. Also phosphorylates Ins(1,3,4)P3 or a racemic mixture of Ins(1,4,6)P3 and Ins(3,4,6)P3 to form InsP4. Ins(1,3,4,6)P4 is an essential molecule in the hexakisphosphate (InsP6) pathway. This Arabidopsis thaliana (Mouse-ear cress) protein is Inositol-tetrakisphosphate 1-kinase 3 (ITPK3).